A 574-amino-acid polypeptide reads, in one-letter code: Envelope glycoprotein (574 aa).

The first 22 residues, 1 to 22 (MTVKDIPFWRVLLIFQTARVYA), serve as a signal peptide directing secretion. Topologically, residues 23–514 (GFGDPREAIT…TGLHGLLPYL (492 aa)) are extracellular. 2 N-linked (GlcNAc...) asparagine; by host glycosylation sites follow: N117 and N233. The short motif at 243 to 246 (CWLC) is the CXXC element. Cystine bridges form between C243–C246, C243–C471, and C463–C470. Residues N260, N267, N288, N298, N312, N318, N327, and N345 are each glycosylated (N-linked (GlcNAc...) asparagine; by host). The interval 386–406 (FIPLLVGLGITTAVSTGTTGL) is fusion peptide. Coiled coils occupy residues 407 to 457 (GYSI…LFTA) and 467 to 503 (QEKCCFYANKSGIVRDKIKALQEDLEKRRKEIIDNPF). Residues 446–462 (LQNRRGLDLFTAEQGGI) are immunosuppression. The CX6CC motif lies at 463 to 471 (CLALQEKCC). The N-linked (GlcNAc...) asparagine; by host glycan is linked to N475. A helical transmembrane segment spans residues 515-535 (LPLLRPLLCLLLLITFGPLIF). Residues 536 to 574 (NKIIAFVKQQMDAIQAKPIQVHYHRLEQEDNGGVYLRVS) are Cytoplasmic-facing. A YXXL motif; contains endocytosis signal motif is present at residues 558–561 (YHRL).

As to quaternary structure, the mature envelope protein (Env) consists of a trimer of SU-TM heterodimers attached by a labile interchain disulfide bond. In terms of processing, specific enzymatic cleavages in vivo yield mature proteins. Envelope glycoproteins are synthesized as an inactive precursor that is N-glycosylated and processed likely by host cell furin or by a furin-like protease in the Golgi to yield the mature SU and TM proteins. The cleavage site between SU and TM requires the minimal sequence [KR]-X-[KR]-R. The R-peptide is released from the C-terminus of the cytoplasmic tail of the TM protein upon particle formation as a result of proteolytic cleavage by the viral protease. Cleavage of this peptide is required for TM to become fusogenic. The CXXC motif is highly conserved across a broad range of retroviral envelope proteins. It is thought to participate in the formation of a labile disulfide bond possibly with the CX6CC motif present in the transmembrane protein. Isomerization of the intersubunit disulfide bond to an SU intrachain disulfide bond is thought to occur upon receptor recognition in order to allow membrane fusion.

Its subcellular location is the virion membrane. It is found in the host cell membrane. Functionally, the surface protein (SU) attaches the virus to the host cell by binding to its receptor. This interaction triggers the refolding of the transmembrane protein (TM) and is thought to activate its fusogenic potential by unmasking its fusion peptide. Fusion occurs at the host cell plasma membrane. The transmembrane protein (TM) acts as a class I viral fusion protein. Under the current model, the protein has at least 3 conformational states: pre-fusion native state, pre-hairpin intermediate state, and post-fusion hairpin state. During viral and target cell membrane fusion, the coiled coil regions (heptad repeats) assume a trimer-of-hairpins structure, positioning the fusion peptide in close proximity to the C-terminal region of the ectodomain. The formation of this structure appears to drive apposition and subsequent fusion of viral and target cell membranes. Membranes fusion leads to delivery of the nucleocapsid into the cytoplasm. The sequence is that of Envelope glycoprotein (env) from Macaca mulatta (Rhesus macaque).